The chain runs to 120 residues: UPF0145 protein Mboo_1021 (120 aa).

The protein belongs to the UPF0145 family.

This chain is UPF0145 protein Mboo_1021, found in Methanoregula boonei (strain DSM 21154 / JCM 14090 / 6A8).